Reading from the N-terminus, the 225-residue chain is 3-dehydroquinate dehydratase (225 aa).

Residues 30–32 (EWR) and Arg62 each bind 3-dehydroquinate. The active-site Proton donor/acceptor is His118. Residue Lys143 is the Schiff-base intermediate with substrate of the active site. Residues Arg186 and Gln209 each contribute to the 3-dehydroquinate site.

The protein belongs to the type-I 3-dehydroquinase family. In terms of assembly, homodimer.

It catalyses the reaction 3-dehydroquinate = 3-dehydroshikimate + H2O. The protein operates within metabolic intermediate biosynthesis; chorismate biosynthesis; chorismate from D-erythrose 4-phosphate and phosphoenolpyruvate: step 3/7. Involved in the third step of the chorismate pathway, which leads to the biosynthesis of aromatic amino acids. Catalyzes the cis-dehydration of 3-dehydroquinate (DHQ) and introduces the first double bond of the aromatic ring to yield 3-dehydroshikimate. This Streptococcus agalactiae serotype Ia (strain ATCC 27591 / A909 / CDC SS700) protein is 3-dehydroquinate dehydratase.